The chain runs to 540 residues: Putative sel1-like repeat-containing protein R815 (540 aa).

Sel1-like repeat units lie at residues Ile129 to Asn164, Leu165 to Tyr200, Pro201 to Tyr236, Pro237 to Cys272, Leu273 to Tyr308, and Leu309 to Lys344.

The protein is Putative sel1-like repeat-containing protein R815 of Acanthamoeba polyphaga (Amoeba).